A 209-amino-acid chain; its full sequence is Protease (209 aa).

Active-site residues include histidine 55, aspartate 72, and cysteine 123.

This sequence belongs to the peptidase C5 family. In terms of assembly, interacts with protease cofactor pVI-C; this interaction is necessary for protease activation.

Its subcellular location is the virion. It is found in the host nucleus. The catalysed reaction is Cleaves proteins of the adenovirus and its host cell at two consensus sites: -Yaa-Xaa-Gly-Gly-|-Xaa- and -Yaa-Xaa-Gly-Xaa-|-Gly- (in which Yaa is Met, Ile or Leu, and Xaa is any amino acid).. Requires DNA and protease cofactor for maximal activation. Inside nascent virions, becomes partially activated by binding to the viral DNA, allowing it to cleave the cofactor that binds to the protease and fully activates it. Actin, like the viral protease cofactor, seems to act as a cofactor in the cleavage of cytokeratin 18 and of actin itself. Functionally, cleaves viral precursor proteins (pTP, pIIIa, pVI, pVII, pVIII, and pX) inside newly assembled particles giving rise to mature virions. Protease complexed to its cofactor slides along the viral DNA to specifically locate and cleave the viral precursors. Mature virions have a weakened organization compared to the unmature virions, thereby facilitating subsequent uncoating. Without maturation, the particle lacks infectivity and is unable to uncoat. Late in adenovirus infection, in the cytoplasm, may participate in the cytoskeleton destruction. Cleaves host cell cytoskeletal keratins K7 and K18. In Human adenovirus D serotype 17 (HAdV-17), this protein is Protease.